Consider the following 433-residue polypeptide: Keratin, type I cytoskeletal 47 kDa (433 aa).

Residues 1 to 73 form a head region; sequence MSYSTRSISQ…AFNVSVTSNN (73 aa). Residues 74-109 are coil 1A; it reads GKETMQNLNDRLANYLDRVRSLEQANHELELKIREY. Residues 74–385 form the IF rod domain; it reads GKETMQNLND…RLLEGEDTRF (312 aa). The linker 1 stretch occupies residues 110–127; that stretch reads LDKKAAVGSLDYSGYYNT. The tract at residues 128-219 is coil 1B; it reads INLLRSQIND…KNHEEELAVV (92 aa). The tract at residues 220–242 is linker 12; it reads RSSARGNVDVQVDSAPPVDLAQI. Residues 243–381 form a coil 2 region; it reads MADVRSQYES…ATYRRLLEGE (139 aa). Positions 382-433 are tail; the sequence is DTRFSQTETQKAVTIVSKEQSSSSIKKVKTVIEEVVDGKVVSSRVEELTETS.

This sequence belongs to the intermediate filament family. As to quaternary structure, heterotetramer of two type I and two type II keratins.

This chain is Keratin, type I cytoskeletal 47 kDa (xk70a), found in Xenopus laevis (African clawed frog).